Consider the following 290-residue polypeptide: ATP synthase gamma chain (290 aa).

This sequence belongs to the ATPase gamma chain family. As to quaternary structure, F-type ATPases have 2 components, CF(1) - the catalytic core - and CF(0) - the membrane proton channel. CF(1) has five subunits: alpha(3), beta(3), gamma(1), delta(1), epsilon(1). CF(0) has three main subunits: a, b and c.

It is found in the cell membrane. Its function is as follows. Produces ATP from ADP in the presence of a proton gradient across the membrane. The gamma chain is believed to be important in regulating ATPase activity and the flow of protons through the CF(0) complex. This chain is ATP synthase gamma chain, found in Listeria innocua serovar 6a (strain ATCC BAA-680 / CLIP 11262).